Here is a 199-residue protein sequence, read N- to C-terminus: DnaJ homolog subfamily C member 5B (199 aa).

Phosphoserine occurs at positions 14 and 16. One can recognise a J domain in the interval A19 to G84.

As to quaternary structure, interacts with the chaperone complex consisting of HSC70 and SGTA. In terms of processing, palmitoylated.

The protein localises to the membrane. This chain is DnaJ homolog subfamily C member 5B (DNAJC5B), found in Bos taurus (Bovine).